A 352-amino-acid polypeptide reads, in one-letter code: N-acetyl-gamma-glutamyl-phosphate reductase (352 aa).

The active site involves Cys156.

The protein belongs to the NAGSA dehydrogenase family. Type 1 subfamily.

Its subcellular location is the cytoplasm. It carries out the reaction N-acetyl-L-glutamate 5-semialdehyde + phosphate + NADP(+) = N-acetyl-L-glutamyl 5-phosphate + NADPH + H(+). Its pathway is amino-acid biosynthesis; L-arginine biosynthesis; N(2)-acetyl-L-ornithine from L-glutamate: step 3/4. Catalyzes the NADPH-dependent reduction of N-acetyl-5-glutamyl phosphate to yield N-acetyl-L-glutamate 5-semialdehyde. The chain is N-acetyl-gamma-glutamyl-phosphate reductase from Afipia carboxidovorans (strain ATCC 49405 / DSM 1227 / KCTC 32145 / OM5) (Oligotropha carboxidovorans).